The following is a 397-amino-acid chain: MNCISDFFTYETTKSVVVKSWTIGIINRAVQLLIISYFVGWVFLHEKAYQVRDTAIESSVVTKVKGFGRYANRVMDVSDYVTPPQGTSVFVIITKMIVTENQMQGFCPENEEKYRCVSDSQCGPERFPGGGILTGRCVNYSSVLRTCEIQGWCPTEVDTVEMPIMMEAENFTIFIKNSIRFPLFNFEKGNLLPNLTDKDIKRCRFHPEKAPFCPILRVGDVVKFAGQDFAKLARTGGVLGIKIGWVCDLDKAWDQCIPKYSFTRLDGVSEKSSVSPGYNFRFAKYYKMENGSEYRTLLKAFGIRFDVLVYGNAGKFNIIPTIISSVAAFTSVGVGTVLCDIILLNFLKGADHYKARKFEEVTETTLKGTASTNPVFASDQATVEKQSTDSGAYSIGH.

Over 1 to 20 (MNCISDFFTYETTKSVVVKS) the chain is Cytoplasmic. Residues 21-43 (WTIGIINRAVQLLIISYFVGWVF) form a helical membrane-spanning segment. At 44-322 (LHEKAYQVRD…AGKFNIIPTI (279 aa)) the chain is on the extracellular side. ATP-binding residues include Lys-63 and Lys-65. 3 cysteine pairs are disulfide-bonded: Cys-107/Cys-153, Cys-116/Cys-137, and Cys-122/Cys-147. Glu-111 is a binding site for Mg(2+). Residue Asn-139 is glycosylated (N-linked (GlcNAc...) asparagine). Asp-158 contributes to the Mg(2+) binding site. Asp-158 provides a ligand contact to Ca(2+). N-linked (GlcNAc...) asparagine glycosylation is present at Asn-170. Thr-172 provides a ligand contact to ATP. N-linked (GlcNAc...) asparagine glycosylation is present at Asn-194. Intrachain disulfides connect Cys-203-Cys-213 and Cys-247-Cys-256. Positions 275, 279, and 281 each coordinate ATP. An N-linked (GlcNAc...) asparagine glycan is attached at Asn-290. ATP is bound at residue Lys-299. Residues 323–341 (ISSVAAFTSVGVGTVLCDI) traverse the membrane as a helical segment. Residues 342–397 (ILLNFLKGADHYKARKFEEVTETTLKGTASTNPVFASDQATVEKQSTDSGAYSIGH) are Cytoplasmic-facing.

This sequence belongs to the P2X receptor family. Homotrimer. Forms heterotrimer with P2RX2. Heterotrimeric P2RX2/3 has a ligand dose-response profile that is distinct from either homotrimeric P2RX2 or P2RX3. As to expression, selectively expressed in sensory ganglia.

It localises to the cell membrane. It catalyses the reaction Ca(2+)(in) = Ca(2+)(out). The catalysed reaction is Na(+)(in) = Na(+)(out). With respect to regulation, has high sensitivity to ATP. Fast activation by external ATP. Exhibits rapid desensitization. Sensitives to the ATP agonist:alpha/beta-methylene-ATP. Subject to allosteric inhibition by AF-219. Mg(2+) and Ca(2+) slow deactivation of P2RX3. Extracellular ATP-activated non-selective cation channel. Plays particularly important role in sensory neurons where its activation is critical for gustatory, nociceptive responses, visceral reflexes and sensory hypersensitization. This Rattus norvegicus (Rat) protein is P2X purinoceptor 3 (P2rx3).